The sequence spans 376 residues: MNKTLKLAKNLVSIDSITPQDKGCQSIMTNHLSHLNFKITDLKFGEVDNFWAIRGHQSPVFVFAGHTDVVPVGDELKWHISPFSAQVQDGMLHGRGTADMKGSLAAMLSATDRFVKDYPNHKGSIGYLITSDEEGPATDGTVKVAKYLKEINQIVDYCLVGEPSATNELGDVIKNGRRGSLNGILKIIGKQGHIAYPHLADNPIHLAISALNDLCNEVWDKGNEYFPATSFQISNIHSGTGVTNIIPGESDVVLNFRYSTQNTHKQLQSRVCVILNKHNFEYQITWEHSGYPFLTPKGKLVNACTNAIKTVKNINTQLSTSGGTSDGRFIALILKAQVVELGPLNATIHQVDECVSIQDLEDLSDIYYHVLKNILT.

Histidine 66 provides a ligand contact to Zn(2+). Residue aspartate 68 is part of the active site. Aspartate 99 lines the Zn(2+) pocket. The active-site Proton acceptor is the glutamate 133. Residues glutamate 134, glutamate 162, and histidine 349 each coordinate Zn(2+).

The protein belongs to the peptidase M20A family. DapE subfamily. Homodimer. Zn(2+) serves as cofactor. Requires Co(2+) as cofactor.

The enzyme catalyses N-succinyl-(2S,6S)-2,6-diaminopimelate + H2O = (2S,6S)-2,6-diaminopimelate + succinate. It functions in the pathway amino-acid biosynthesis; L-lysine biosynthesis via DAP pathway; LL-2,6-diaminopimelate from (S)-tetrahydrodipicolinate (succinylase route): step 3/3. Its function is as follows. Catalyzes the hydrolysis of N-succinyl-L,L-diaminopimelic acid (SDAP), forming succinate and LL-2,6-diaminopimelate (DAP), an intermediate involved in the bacterial biosynthesis of lysine and meso-diaminopimelic acid, an essential component of bacterial cell walls. This chain is Succinyl-diaminopimelate desuccinylase, found in Ruthia magnifica subsp. Calyptogena magnifica.